The sequence spans 427 residues: 3-deoxy-D-manno-octulosonic acid transferase (427 aa).

The chain crosses the membrane as a helical; Signal-anchor span at residues 4–24 (FFYTSLLLICQPLILCFIGLL). Glu-62 functions as the Proton acceptor in the catalytic mechanism. CMP is bound by residues 270 to 271 (PR), 311 to 313 (MGE), and 337 to 340 (NPLE).

It belongs to the glycosyltransferase group 1 family. Glycosyltransferase 30 subfamily.

It is found in the cell inner membrane. The enzyme catalyses lipid IVA (E. coli) + CMP-3-deoxy-beta-D-manno-octulosonate = alpha-Kdo-(2-&gt;6)-lipid IVA (E. coli) + CMP + H(+). It participates in bacterial outer membrane biogenesis; LPS core biosynthesis. Its function is as follows. Involved in lipopolysaccharide (LPS) biosynthesis. Catalyzes the transfer of a single 3-deoxy-D-manno-octulosonate (Kdo) residue from CMP-Kdo to lipid IV(A), the tetraacyldisaccharide-1,4'-bisphosphate precursor of lipid A. Is strictly monofunctional, i.e. is capable of adding only a single Kdo residue to the acceptor lipid. This is 3-deoxy-D-manno-octulosonic acid transferase (waaA) from Haemophilus influenzae (strain ATCC 51907 / DSM 11121 / KW20 / Rd).